We begin with the raw amino-acid sequence, 97 residues long: MKLRPLHDRVVIRRSEEETKTAGGIVLPGSAAEKPNRGEVVAVGTGRVLDNGEVRPLAVKVGDKVVFGPYSGSNTIKVDGEDLLVMGENEIFAVVEA.

This sequence belongs to the GroES chaperonin family. In terms of assembly, heptamer of 7 subunits arranged in a ring. Interacts with the chaperonin GroEL.

The protein localises to the cytoplasm. Its function is as follows. Together with the chaperonin GroEL, plays an essential role in assisting protein folding. The GroEL-GroES system forms a nano-cage that allows encapsulation of the non-native substrate proteins and provides a physical environment optimized to promote and accelerate protein folding. GroES binds to the apical surface of the GroEL ring, thereby capping the opening of the GroEL channel. The protein is Co-chaperonin GroES of Azotobacter vinelandii (strain DJ / ATCC BAA-1303).